The chain runs to 158 residues: Cyclic pyranopterin monophosphate synthase (158 aa).

Residues Leu-76–His-78 and Met-114–Glu-115 contribute to the substrate site. The active site involves Asp-129.

This sequence belongs to the MoaC family. Homohexamer; trimer of dimers.

The enzyme catalyses (8S)-3',8-cyclo-7,8-dihydroguanosine 5'-triphosphate = cyclic pyranopterin phosphate + diphosphate. It participates in cofactor biosynthesis; molybdopterin biosynthesis. Catalyzes the conversion of (8S)-3',8-cyclo-7,8-dihydroguanosine 5'-triphosphate to cyclic pyranopterin monophosphate (cPMP). This Shewanella baltica (strain OS155 / ATCC BAA-1091) protein is Cyclic pyranopterin monophosphate synthase.